A 729-amino-acid chain; its full sequence is Fatty acid oxidation complex subunit alpha (729 aa).

The tract at residues 1-189 (MLYKGDTLYL…KIGLVDGVVK (189 aa)) is enoyl-CoA hydratase/isomerase. Aspartate 296 contributes to the substrate binding site. The segment at 311–729 (ETPKQAAVLG…ARAVGDLKTA (419 aa)) is 3-hydroxyacyl-CoA dehydrogenase. NAD(+) contacts are provided by residues methionine 324, aspartate 343, 400–402 (VVE), lysine 407, and serine 429. The active-site For 3-hydroxyacyl-CoA dehydrogenase activity is the histidine 450. Residue asparagine 453 participates in NAD(+) binding. Residues asparagine 500 and tyrosine 660 each coordinate substrate.

In the N-terminal section; belongs to the enoyl-CoA hydratase/isomerase family. It in the C-terminal section; belongs to the 3-hydroxyacyl-CoA dehydrogenase family. In terms of assembly, heterotetramer of two alpha chains (FadB) and two beta chains (FadA).

The catalysed reaction is a (3S)-3-hydroxyacyl-CoA + NAD(+) = a 3-oxoacyl-CoA + NADH + H(+). It catalyses the reaction a (3S)-3-hydroxyacyl-CoA = a (2E)-enoyl-CoA + H2O. It carries out the reaction a 4-saturated-(3S)-3-hydroxyacyl-CoA = a (3E)-enoyl-CoA + H2O. The enzyme catalyses (3S)-3-hydroxybutanoyl-CoA = (3R)-3-hydroxybutanoyl-CoA. The catalysed reaction is a (3Z)-enoyl-CoA = a 4-saturated (2E)-enoyl-CoA. It catalyses the reaction a (3E)-enoyl-CoA = a 4-saturated (2E)-enoyl-CoA. The protein operates within lipid metabolism; fatty acid beta-oxidation. Involved in the aerobic and anaerobic degradation of long-chain fatty acids via beta-oxidation cycle. Catalyzes the formation of 3-oxoacyl-CoA from enoyl-CoA via L-3-hydroxyacyl-CoA. It can also use D-3-hydroxyacyl-CoA and cis-3-enoyl-CoA as substrate. In Escherichia fergusonii (strain ATCC 35469 / DSM 13698 / CCUG 18766 / IAM 14443 / JCM 21226 / LMG 7866 / NBRC 102419 / NCTC 12128 / CDC 0568-73), this protein is Fatty acid oxidation complex subunit alpha.